The chain runs to 199 residues: Pyrrolidone-carboxylate peptidase (199 aa).

Active-site residues include glutamate 80, cysteine 142, and histidine 166.

The protein belongs to the peptidase C15 family. Homotetramer.

It localises to the cytoplasm. It carries out the reaction Release of an N-terminal pyroglutamyl group from a polypeptide, the second amino acid generally not being Pro.. Functionally, removes 5-oxoproline from various penultimate amino acid residues except L-proline. The sequence is that of Pyrrolidone-carboxylate peptidase from Oceanobacillus iheyensis (strain DSM 14371 / CIP 107618 / JCM 11309 / KCTC 3954 / HTE831).